The sequence spans 1261 residues: AT-rich interactive domain-containing protein 4A (1261 aa).

A DNA-binding region spans residues 4-121; the sequence is ADEPAYLTVG…RHFAESETLD (118 aa). 3 disordered regions span residues 142–169, 273–310, and 435–470; these read RGRRSSLPITEDEKEEESSEEEDEDKRR, ESSSSDDEECPAEEHEEEKEKEAKKEEEELPEEELDPE, and APEMPLLDVKSEPEENTDSNSESDREDTELKSPRGR. 2 stretches are compositionally biased toward acidic residues: residues 151 to 165 and 276 to 289; these read TEDEKEEESSEEEDE and SSDDEECPAEEHEE. Residues 290–299 show a composition bias toward basic and acidic residues; that stretch reads EKEKEAKKEE. Acidic residues predominate over residues 300–310; that stretch reads EELPEEELDPE. Positions 309 to 401 constitute an ARID domain; that stretch reads PEERDNFLQQ…YLYGFEEYCR (93 aa). Residue lysine 481 forms a Glycyl lysine isopeptide (Lys-Gly) (interchain with G-Cter in SUMO2) linkage. Disordered regions lie at residues 498-582, 633-768, and 842-953; these read LENK…GTKV, WPLD…EAGD, and FSST…EDAM. A compositionally biased stretch (basic and acidic residues) spans 512–522; the sequence is PAAKREHELLF. A compositionally biased stretch (basic residues) spans 526-536; that stretch reads STPKNKEKKIK. A compositionally biased stretch (acidic residues) spans 541–551; sequence SERDSDEEEEK. Residues 552–564 are compositionally biased toward basic and acidic residues; sequence SQEREETESRCDS. The span at 565–574 shows a compositional bias: acidic residues; sequence EGEDEEDDTE. The region spanning 579–631 is the Tudor-knot domain; that stretch reads GTKVKVKYGRGKTQKIYEASIKSTEMDDGEILYLVHYYGWNVRYDEWVKADRI. Positions 640–649 are enriched in basic residues; that stretch reads PKKKQKKKVK. Basic and acidic residues predominate over residues 650–665; sequence NKEDSEKDEKRDEERQ. A compositionally biased stretch (polar residues) spans 676 to 689; it reads STFSPNMPYSLSKT. Position 679 is a phosphoserine (serine 679). A compositionally biased stretch (low complexity) spans 690-702; the sequence is SNSEGKSDSCSSD. Residues 708-753 are compositionally biased toward basic and acidic residues; it reads QLEKSSGGEDLSPDVKEELEKNENAHDDKLDEENPKIVHISKENDR. At serine 719 the chain carries Phosphoserine. Residues lysine 723 and lysine 743 each participate in a glycyl lysine isopeptide (Lys-Gly) (interchain with G-Cter in SUMO2) cross-link. At serine 867 the chain carries Phosphoserine. Composition is skewed to basic and acidic residues over residues 899–909 and 929–947; these read KGAHVEQHFET and TSEKSDSPAEEEPVHTPLK. The retinoblastoma protein binding stretch occupies residues 955–968; sequence LIGPETLVCHEVDL. Positions 1067-1080 are enriched in basic and acidic residues; that stretch reads HERESREKGQKRPS. 2 disordered regions span residues 1067-1173 and 1216-1261; these read HERE…RTYK and RRRK…VECR. Phosphoserine is present on residues serine 1113 and serine 1149. Positions 1230 to 1252 are enriched in low complexity; sequence HAGASMSSASSDTGMSPSSSSPP.

In terms of assembly, identified in mSin3A corepressor complexes together with SIN3A, SIN3B, RBBP4, RBBP7, SAP30, BRMS1, HDAC1 and HDAC2. Interacts with BRMS1. Interacts with RB1. Interacts with ARID4B. Interacts with AR. As to expression, expressed in Sertoli cells of the testis.

The protein localises to the nucleus. Its function is as follows. DNA-binding protein which modulates activity of several transcription factors including RB1 (retinoblastoma-associated protein) and AR (androgen receptor). May function as part of an mSin3A repressor complex. Has no intrinsic transcriptional activity. Plays a role in the regulation of epigenetic modifications at the PWS/AS imprinting center near the SNRPN promoter, where it might function as part of a complex with RB1 and ARID4B. Involved in spermatogenesis, together with ARID4B, where it acts as a transcriptional coactivator for AR and enhances expression of genes required for sperm maturation. Regulates expression of the tight junction protein CLDN3 in the testis, which is important for integrity of the blood-testis barrier. Plays a role in myeloid homeostasis where it regulates the histone methylation state of bone marrow cells and expression of various genes involved in hematopoiesis. May function as a leukemia suppressor. This chain is AT-rich interactive domain-containing protein 4A, found in Mus musculus (Mouse).